We begin with the raw amino-acid sequence, 309 residues long: MTATNHPKLFKRPVDGVLLLDKPGGMTSNEALQRVKRLFHAKKAGHTGSLDPLATGLLPICLGEATKFSQFLLEADKSYSVKGRLGVRTASGDSESPILTECPIPKLTKRALEKTLFAFRGVIDQTPSMYSALKHKGQPLYKLARQGIEVERKTRQVTIYELTLLDWDNESIELYVHCSKGTYIRTLLDDVGEALGCGAHVVALRRLRVAHYHEDQMIKLAHLEREYDKANYTGLDRYLLPLETMVSHFPAIKLSSSTAFYLQQGQAVMVPNAPTHGFVRLRDQNDQFIGIGEILSDARIAPRRLIQKR.

Residue aspartate 51 is the Nucleophile of the active site.

The protein belongs to the pseudouridine synthase TruB family. Type 1 subfamily.

It catalyses the reaction uridine(55) in tRNA = pseudouridine(55) in tRNA. Responsible for synthesis of pseudouridine from uracil-55 in the psi GC loop of transfer RNAs. This is tRNA pseudouridine synthase B from Coxiella burnetii (strain RSA 331 / Henzerling II).